The chain runs to 482 residues: PAN domain-containing protein At5g03700 (482 aa).

An N-terminal signal peptide occupies residues 1–31; the sequence is MEGLCLNSFTRVLLLLFVFLVFSHKWQRVNA. The region spanning 330-411 is the PAN domain; sequence CDKTTEFKVV…SKLGYFKVRE (82 aa). Intrachain disulfides connect C363–C385 and C367–C373. The helical transmembrane segment at 425-445 threads the bilayer; it reads GMSLLAVIALVLMVAMVYVGF.

The protein resides in the membrane. The sequence is that of PAN domain-containing protein At5g03700 from Arabidopsis thaliana (Mouse-ear cress).